We begin with the raw amino-acid sequence, 177 residues long: PBAN-type neuropeptides (177 aa).

Positions Met-1–Gly-23 are cleaved as a signal peptide. A propeptide spanning residues Glu-24–Lys-54 is cleaved from the precursor. Residues Glu-28–Arg-73 are disordered. Residues Ser-31 to Gly-45 show a composition bias toward polar residues. Low complexity predominate over residues Cys-47–Thr-59. The residue at position 74 (Leu-74) is a Leucine amide. Positions His-78–Glu-113 are excised as a propeptide. Residues Leu-124, Leu-154, and Leu-166 each carry the leucine amide modification. The propeptide occupies Gln-169–Ile-177.

It belongs to the pyrokinin family. Pyrokinins (PK) 1 to 4 are expressed in the retrocerebral complex. PK 1 is expressed in central brain, anntennal lobes and abominal ganglia. PK 2 is expressed in optical lobes and in gnathal, thoracic and abdominal ganglia. PK 3 is expressed in optical lobes and in thoracic and abdominal ganglia (at protein level).

Its subcellular location is the secreted. Functionally, pyrokinins mediate visceral muscle contractile activity (myotropic activity). This chain is PBAN-type neuropeptides, found in Camponotus floridanus (Florida carpenter ant).